A 347-amino-acid polypeptide reads, in one-letter code: Indole-3-glycerol phosphate lyase, chloroplastic (347 aa).

Disordered regions lie at residues 1-38 and 64-89; these read MAFA…TPRR and APPQ…RSRP. The transit peptide at 1-53 directs the protein to the chloroplast; that stretch reads MAFAPKTSSSSSLSSALQAAQSPPLLLRRMSSTATPRRRYDAAVVVTTTTTAR. A compositionally biased stretch (low complexity) spans 8–27; sequence SSSSSLSSALQAAQSPPLLL. Residues 64–76 are compositionally biased toward pro residues; the sequence is APPQAPAPAPVPP.

This sequence belongs to the TrpA family. Tetramer of two alpha and two beta chains for the tryptophan synthase activity. Homodimer of alpha chains for the indole-3-glycerol phosphate lyase activity.

It localises to the plastid. Its subcellular location is the chloroplast. The enzyme catalyses (1S,2R)-1-C-(indol-3-yl)glycerol 3-phosphate = indole + D-glyceraldehyde 3-phosphate. It catalyses the reaction (1S,2R)-1-C-(indol-3-yl)glycerol 3-phosphate + L-serine = D-glyceraldehyde 3-phosphate + L-tryptophan + H2O. The protein operates within secondary metabolite biosynthesis; 2,4-dihydroxy-1,4-benzoxazin-3-one biosynthesis; 2,4-dihydroxy-1,4-benzoxazin-3-one from indoleglycerol phosphate: step 1/5. It functions in the pathway amino-acid biosynthesis; L-tryptophan biosynthesis; L-tryptophan from chorismate: step 5/5. The alpha subunit is responsible for the aldol cleavage of indoleglycerol phosphate to indole and glyceraldehyde 3-phosphate. In bacteria, tryptophan synthase alpha (TSA) activity is almost completely dependent on formation of an active alpha2beta2 complex with tryptophan synthase beta (TSB), and indole is usually not released during tryptophan synthesis. In maize, the TSA homolog BX1 catalyzes the formation of free indole from indole-3-glycerol phosphate, independently of TSB. The chain is Indole-3-glycerol phosphate lyase, chloroplastic (BX1) from Zea mays (Maize).